The chain runs to 287 residues: U-megalopygitoxin(8)-Mc8 (287 aa).

Residues 1 to 17 (MYLQYLVLSLFSTTVYG) form the signal peptide.

It belongs to the caterpillar 8 family. Contains 2 disulfide bonds. As to expression, expressed by the venom apparatus.

Its subcellular location is the secreted. Probable toxin. The sequence is that of U-megalopygitoxin(8)-Mc8 from Megalopyge crispata (Black-waved flannel moth).